We begin with the raw amino-acid sequence, 526 residues long: Fusicoccadiene 8-ol C-16-hydroxylase (526 aa).

The chain crosses the membrane as a helical span at residues 34 to 56 (AFVGFSVLGLTLLFSKLFYNAYL). Residues asparagine 309, asparagine 418, and asparagine 434 are each glycosylated (N-linked (GlcNAc...) asparagine). Heme is bound at residue cysteine 470.

The protein belongs to the cytochrome P450 family. Heme is required as a cofactor.

It localises to the membrane. Its pathway is mycotoxin biosynthesis. In terms of biological role, cytochrome P450 monooxygenase; part of the 2 gene clusters that mediate the biosynthesis of fusicoccins, diterpene glucosides that display phytohormone-like activity and function as potent activators of plasma membrane H(+)-ATPases in plants by modifying 14-3-3 proteins and cause the plant disease constriction canker. The first step in the pathway is performed by the fusicoccadiene synthase PaFS that possesses both prenyl transferase and terpene cyclase activity, converting isopentenyl diphosphate and dimethylallyl diphosphate into geranylgeranyl diphosphate (GGDP) and successively converting GGDP into fusicocca-2,10(14)-diene, a precursor for fusicoccin H. The second step is the oxidation at the C-8 position by the cytochrome P450 monooxygenase PaP450-2 to yield fusicocca-2,10(14)-diene-8-beta-ol. The cytochrome P450 monooxygenase PaP450-1 then catalyzes the hydroxylation at the C-16 position to produce fusicocca-2,10(14)-diene-8-beta,16-diol. The dioxygenase fc-dox then catalyzes the 16-oxydation of fusicocca-2,10(14)-diene-8-beta,16-diol to yield an aldehyde (8-beta-hydroxyfusicocca-1,10(14)-dien-16-al). The short-chain dehydrogenase/reductase fc-sdr catalyzes the reduction of the aldehyde to yield fusicocca-1,10(14)-diene-8-beta,16-diol. The next step is the hydroxylation at C-9 performed by the cytochrome P450 monooxygenase PaP450-3 that leads to fusicoccin H aglycon which is glycosylated to fusicoccin H by the O-glycosyltransferase PaGT. Hydroxylation at C-12 by the cytochrome P450 monooxygenase PaP450-4 leads then to the production of fusicoccin Q and is followed by methylation by the O-methyltransferase PaMT to yield fusicoccin P. Fusicoccin P is further converted to fusicoccin J via prenylation by the O-glucose prenyltransferase PaPT. Cytochrome P450 monooxygenase PaP450-5 then performs hydroxylation at C-19 to yield dideacetyl-fusicoccin A which is acetylated to 3'-O-deacetyl-fusicoccin A by the O-acetyltransferase PaAT-2. Finally, a another acetylation by the O-acetyltransferase PaAT-1 yields fusicoccin A. The chain is Fusicoccadiene 8-ol C-16-hydroxylase from Phomopsis amygdali (Fusicoccum amygdali).